A 208-amino-acid chain; its full sequence is Protein-L-isoaspartate O-methyltransferase (208 aa).

Ser-59 is an active-site residue.

The protein belongs to the methyltransferase superfamily. L-isoaspartyl/D-aspartyl protein methyltransferase family.

The protein localises to the cytoplasm. The enzyme catalyses [protein]-L-isoaspartate + S-adenosyl-L-methionine = [protein]-L-isoaspartate alpha-methyl ester + S-adenosyl-L-homocysteine. In terms of biological role, catalyzes the methyl esterification of L-isoaspartyl residues in peptides and proteins that result from spontaneous decomposition of normal L-aspartyl and L-asparaginyl residues. It plays a role in the repair and/or degradation of damaged proteins. The polypeptide is Protein-L-isoaspartate O-methyltransferase (Pectobacterium carotovorum subsp. carotovorum (strain PC1)).